A 500-amino-acid chain; its full sequence is L-arabinose isomerase (500 aa).

The Mn(2+) site is built by Glu-306, Glu-331, His-348, and His-447.

This sequence belongs to the arabinose isomerase family. Mn(2+) serves as cofactor.

It catalyses the reaction beta-L-arabinopyranose = L-ribulose. It participates in carbohydrate degradation; L-arabinose degradation via L-ribulose; D-xylulose 5-phosphate from L-arabinose (bacterial route): step 1/3. Its function is as follows. Catalyzes the conversion of L-arabinose to L-ribulose. The chain is L-arabinose isomerase from Anoxybacillus flavithermus (strain DSM 21510 / WK1).